A 142-amino-acid chain; its full sequence is Small ribosomal subunit protein uS12 (142 aa).

It belongs to the universal ribosomal protein uS12 family. Part of the 30S ribosomal subunit.

Functionally, with S4 and S5 plays an important role in translational accuracy. Located at the interface of the 30S and 50S subunits. This chain is Small ribosomal subunit protein uS12, found in Methanococcoides burtonii (strain DSM 6242 / NBRC 107633 / OCM 468 / ACE-M).